A 125-amino-acid chain; its full sequence is Cu-Zn superoxide dismutase-like protein OPG175 (125 aa).

A disulfide bridge links cysteine 52 with cysteine 102.

The protein belongs to the Cu-Zn superoxide dismutase family.

The protein localises to the virion. The protein resides in the host cytoplasm. In terms of biological role, superoxide dismutase-like protein with no enzymatic activity. The chain is Cu-Zn superoxide dismutase-like protein OPG175 (OPG175) from Monkeypox virus.